We begin with the raw amino-acid sequence, 455 residues long: Bifunctional protein GlmU (455 aa).

The pyrophosphorylase stretch occupies residues 1–232 (MASTTGALIL…DPNLLGVNNP (232 aa)). UDP-N-acetyl-alpha-D-glucosamine contacts are provided by residues 10–13 (LAAG), Lys24, Gln75, and 80–81 (GT). Asp106 contributes to the Mg(2+) binding site. UDP-N-acetyl-alpha-D-glucosamine-binding residues include Gly141, Glu155, Asn172, and Asn230. Residue Asn230 coordinates Mg(2+). The interval 233–253 (AELIRSEALLRTRLVIGHIEG) is linker. The tract at residues 254–455 (GVLIHAPETV…QTNLPRKPKA (202 aa)) is N-acetyltransferase. Arg336 and Lys354 together coordinate UDP-N-acetyl-alpha-D-glucosamine. Catalysis depends on His366, which acts as the Proton acceptor. Tyr369 and Asn380 together coordinate UDP-N-acetyl-alpha-D-glucosamine. Acetyl-CoA contacts are provided by residues Ala383, 389–390 (NY), Ser408, Ala426, and Arg443.

In the N-terminal section; belongs to the N-acetylglucosamine-1-phosphate uridyltransferase family. It in the C-terminal section; belongs to the transferase hexapeptide repeat family. Homotrimer. The cofactor is Mg(2+).

The protein resides in the cytoplasm. It carries out the reaction alpha-D-glucosamine 1-phosphate + acetyl-CoA = N-acetyl-alpha-D-glucosamine 1-phosphate + CoA + H(+). The catalysed reaction is N-acetyl-alpha-D-glucosamine 1-phosphate + UTP + H(+) = UDP-N-acetyl-alpha-D-glucosamine + diphosphate. Its pathway is nucleotide-sugar biosynthesis; UDP-N-acetyl-alpha-D-glucosamine biosynthesis; N-acetyl-alpha-D-glucosamine 1-phosphate from alpha-D-glucosamine 6-phosphate (route II): step 2/2. It participates in nucleotide-sugar biosynthesis; UDP-N-acetyl-alpha-D-glucosamine biosynthesis; UDP-N-acetyl-alpha-D-glucosamine from N-acetyl-alpha-D-glucosamine 1-phosphate: step 1/1. It functions in the pathway bacterial outer membrane biogenesis; LPS lipid A biosynthesis. Catalyzes the last two sequential reactions in the de novo biosynthetic pathway for UDP-N-acetylglucosamine (UDP-GlcNAc). The C-terminal domain catalyzes the transfer of acetyl group from acetyl coenzyme A to glucosamine-1-phosphate (GlcN-1-P) to produce N-acetylglucosamine-1-phosphate (GlcNAc-1-P), which is converted into UDP-GlcNAc by the transfer of uridine 5-monophosphate (from uridine 5-triphosphate), a reaction catalyzed by the N-terminal domain. This Nitratidesulfovibrio vulgaris (strain DP4) (Desulfovibrio vulgaris) protein is Bifunctional protein GlmU.